The sequence spans 288 residues: Phenazine biosynthesis-like domain-containing protein (288 aa).

Glu46 is an active-site residue.

The protein belongs to the PhzF family. In terms of assembly, interacts with UNRIP/MAWD.

The chain is Phenazine biosynthesis-like domain-containing protein (PBLD) from Homo sapiens (Human).